The sequence spans 251 residues: Triosephosphate isomerase (251 aa).

Residue 10 to 12 coordinates substrate; sequence NWK. His-98 serves as the catalytic Electrophile. Glu-169 acts as the Proton acceptor in catalysis. Residues Gly-175, Ser-213, and 234–235 each bind substrate; that span reads GG.

Belongs to the triosephosphate isomerase family. Homodimer.

It is found in the cytoplasm. It catalyses the reaction D-glyceraldehyde 3-phosphate = dihydroxyacetone phosphate. It participates in carbohydrate biosynthesis; gluconeogenesis. Its pathway is carbohydrate degradation; glycolysis; D-glyceraldehyde 3-phosphate from glycerone phosphate: step 1/1. Its function is as follows. Involved in the gluconeogenesis. Catalyzes stereospecifically the conversion of dihydroxyacetone phosphate (DHAP) to D-glyceraldehyde-3-phosphate (G3P). The polypeptide is Triosephosphate isomerase (Paracidovorax citrulli (strain AAC00-1) (Acidovorax citrulli)).